A 135-amino-acid polypeptide reads, in one-letter code: Protein NrdI (135 aa).

The protein belongs to the NrdI family.

Probably involved in ribonucleotide reductase function. This chain is Protein NrdI, found in Brucella abortus (strain S19).